The following is a 440-amino-acid chain: Chromosome partition protein MukF (440 aa).

The tract at residues 208-236 (LSETSGTLRELQDTLEAAGDKLQANLLRI) is leucine-zipper.

Belongs to the MukF family. Interacts, and probably forms a ternary complex, with MukE and MukB via its C-terminal region. The complex formation is stimulated by calcium or magnesium. It is required for an interaction between MukE and MukB.

It is found in the cytoplasm. The protein resides in the nucleoid. Its function is as follows. Involved in chromosome condensation, segregation and cell cycle progression. May participate in facilitating chromosome segregation by condensation DNA from both sides of a centrally located replisome during cell division. Not required for mini-F plasmid partitioning. Probably acts via its interaction with MukB and MukE. Overexpression results in anucleate cells. It has a calcium binding activity. In Escherichia fergusonii (strain ATCC 35469 / DSM 13698 / CCUG 18766 / IAM 14443 / JCM 21226 / LMG 7866 / NBRC 102419 / NCTC 12128 / CDC 0568-73), this protein is Chromosome partition protein MukF.